The following is a 622-amino-acid chain: Histone-lysine N-methyltransferase set9 (622 aa).

An SET domain is found at serine 120–glycine 234. 4 disordered regions span residues valine 262–valine 314, glutamine 335–threonine 394, proline 427–proline 470, and aspartate 576–methionine 622. Over residues glutamate 265–histidine 285 the composition is skewed to polar residues. Low complexity predominate over residues proline 376–threonine 394. Composition is skewed to polar residues over residues proline 427 to glutamate 437 and aspartate 446 to serine 458. Residues serine 590–threonine 607 are compositionally biased toward basic and acidic residues. The span at threonine 608–methionine 622 shows a compositional bias: basic residues.

Belongs to the class V-like SAM-binding methyltransferase superfamily. Histone-lysine methyltransferase family. Suvar4-20 subfamily.

The protein localises to the nucleus. It localises to the chromosome. It catalyses the reaction L-lysyl(20)-[histone H4] + 3 S-adenosyl-L-methionine = N(6),N(6),N(6)-trimethyl-L-lysyl(20)-[histone H4] + 3 S-adenosyl-L-homocysteine + 3 H(+). In terms of biological role, histone methyltransferase that trimethylates 'Lys-20' of histone H4 to form H4K20me3. The polypeptide is Histone-lysine N-methyltransferase set9 (set9) (Aspergillus fumigatus (strain ATCC MYA-4609 / CBS 101355 / FGSC A1100 / Af293) (Neosartorya fumigata)).